A 629-amino-acid chain; its full sequence is Polyadenylate-binding protein, cytoplasmic and nuclear (629 aa).

The span at 1–11 (MSAAETNQLQE) shows a compositional bias: polar residues. The tract at residues 1–48 (MSAAETNQLQESMEKLNIGSTTEEQSAAAATTTADQSAEEQGESSGVA) is disordered. The span at 20–36 (STTEEQSAAAATTTADQ) shows a compositional bias: low complexity. 4 consecutive RRM domains span residues 52–130 (ASLY…WSQR), 140–217 (GNIF…KHIS), 233–310 (TNIY…RAQK), and 336–413 (VNLF…LAQR). The disordered stretch occupies residues 503 to 534 (PPQFQQDFNGQNMRPQQQQQQQPRGGYYPNRN). Over residues 505 to 517 (QFQQDFNGQNMRP) the composition is skewed to polar residues. Residues 537–618 (SKRDLAAIIS…ALTAFEEYKK (82 aa)) form the PABC domain.

The protein belongs to the polyadenylate-binding protein type-1 family.

It localises to the cytoplasm. Its subcellular location is the nucleus. In terms of biological role, binds the poly(A) tail of mRNA. Appears to be an important mediator of the multiple roles of the poly(A) tail in mRNA biogenesis, stability and translation. In the nucleus, involved in both mRNA cleavage and polyadenylation. Is also required for efficient mRNA export to the cytoplasm. Acts in concert with a poly(A)-specific nuclease (PAN) to affect poly(A) tail shortening, which may occur concomitantly with either nucleocytoplasmic mRNA transport or translational initiation. In the cytoplasm, stimulates translation initiation and regulates mRNA decay through translation termination-coupled poly(A) shortening, probably mediated by PAN. This chain is Polyadenylate-binding protein, cytoplasmic and nuclear (PAB1), found in Candida albicans (strain SC5314 / ATCC MYA-2876) (Yeast).